Reading from the N-terminus, the 341-residue chain is L-threonine 3-dehydrogenase (341 aa).

Cysteine 38 lines the Zn(2+) pocket. Residues threonine 40 and histidine 43 each act as charge relay system in the active site. Zn(2+) is bound by residues histidine 63, glutamate 64, cysteine 93, cysteine 96, cysteine 99, and cysteine 107. NAD(+) is bound by residues isoleucine 175, aspartate 195, arginine 200, 262–264 (LGI), and 286–287 (IY).

Belongs to the zinc-containing alcohol dehydrogenase family. As to quaternary structure, homotetramer. Zn(2+) serves as cofactor.

It is found in the cytoplasm. It catalyses the reaction L-threonine + NAD(+) = (2S)-2-amino-3-oxobutanoate + NADH + H(+). Its pathway is amino-acid degradation; L-threonine degradation via oxydo-reductase pathway; glycine from L-threonine: step 1/2. Functionally, catalyzes the NAD(+)-dependent oxidation of L-threonine to 2-amino-3-ketobutyrate. The polypeptide is L-threonine 3-dehydrogenase (Salmonella typhi).